The sequence spans 294 residues: MSYAYQRFYRGPIEAVIFDWAGTTYDFGSMAPIRAFQNLFAEQEIPITLAEAREPMGTEKREHITRILNMPRVREAWREKYGALASEADIERLYHAFVPMQIEAIRECARPVPGLMETVAWLERRNIKIGANTGYNRDMLDVLTDIAAAQGYRPASNVCATDVPKGRPYPHMSLKNALELGVGDVRACIKVDDTLPGIEEGLAAGMWTVGVTTSGNEVGLSQEDWTALDSASKTVLREQAQERFRRGGAHVIIGSVADLPAAVEYIERWLAQGHGPDTTGLAGVTLTAAGVSLR.

Asp19 functions as the Nucleophile in the catalytic mechanism. Mg(2+) contacts are provided by Asp19 and Ala21. Lys60 (schiff-base intermediate with substrate) is an active-site residue. Residue Asp193 coordinates Mg(2+).

It belongs to the HAD-like hydrolase superfamily. PhnX family. Homodimer. It depends on Mg(2+) as a cofactor.

It catalyses the reaction phosphonoacetaldehyde + H2O = acetaldehyde + phosphate + H(+). Involved in phosphonate degradation. This Hahella chejuensis (strain KCTC 2396) protein is Phosphonoacetaldehyde hydrolase.